We begin with the raw amino-acid sequence, 265 residues long: Glutamate racemase (265 aa).

Substrate contacts are provided by residues 10–11 (DS) and 42–43 (YG). C73 functions as the Proton donor/acceptor in the catalytic mechanism. Residue 74 to 75 (NT) coordinates substrate. C180 functions as the Proton donor/acceptor in the catalytic mechanism. 181–182 (TH) lines the substrate pocket.

This sequence belongs to the aspartate/glutamate racemases family.

It carries out the reaction L-glutamate = D-glutamate. It participates in cell wall biogenesis; peptidoglycan biosynthesis. In terms of biological role, provides the (R)-glutamate required for cell wall biosynthesis. The chain is Glutamate racemase from Synechococcus sp. (strain CC9605).